A 119-amino-acid polypeptide reads, in one-letter code: Phosphoribosyl-AMP cyclohydrolase (119 aa).

Asp-71 is a Mg(2+) binding site. Cys-72 contributes to the Zn(2+) binding site. Positions 73 and 75 each coordinate Mg(2+). Positions 90 and 97 each coordinate Zn(2+).

This sequence belongs to the PRA-CH family. Homodimer. The cofactor is Mg(2+). It depends on Zn(2+) as a cofactor.

The protein localises to the cytoplasm. It carries out the reaction 1-(5-phospho-beta-D-ribosyl)-5'-AMP + H2O = 1-(5-phospho-beta-D-ribosyl)-5-[(5-phospho-beta-D-ribosylamino)methylideneamino]imidazole-4-carboxamide. It participates in amino-acid biosynthesis; L-histidine biosynthesis; L-histidine from 5-phospho-alpha-D-ribose 1-diphosphate: step 3/9. Functionally, catalyzes the hydrolysis of the adenine ring of phosphoribosyl-AMP. In Brucella abortus (strain 2308), this protein is Phosphoribosyl-AMP cyclohydrolase.